Reading from the N-terminus, the 162-residue chain is Selenoprotein F (162 aa).

The signal sequence occupies residues 1–28 (MAAEPGGWLGPALGLRLLLATALQMVSA). Sec-93 is a non-standard amino acid (selenocysteine).

It belongs to the selenoprotein M/F family. As to quaternary structure, forms a tight complex with UGGT1/UGCGL1. Interacts with UGGT2/UGCGL2. Interacts with RDH11.

Its subcellular location is the endoplasmic reticulum lumen. Functionally, may be involved in redox reactions associated with the formation of disulfide bonds. May contribute to the quality control of protein folding in the endoplasmic reticulum. May regulate protein folding by enhancing the catalytic activity of UGGT1/UGCGL1 and UGGT2/UGCGL2. In Sus scrofa (Pig), this protein is Selenoprotein F.